We begin with the raw amino-acid sequence, 237 residues long: Ribonuclease PH (237 aa).

Phosphate is bound by residues Arg86 and 124-126 (GTR).

Belongs to the RNase PH family. In terms of assembly, homohexameric ring arranged as a trimer of dimers.

The catalysed reaction is tRNA(n+1) + phosphate = tRNA(n) + a ribonucleoside 5'-diphosphate. Phosphorolytic 3'-5' exoribonuclease that plays an important role in tRNA 3'-end maturation. Removes nucleotide residues following the 3'-CCA terminus of tRNAs; can also add nucleotides to the ends of RNA molecules by using nucleoside diphosphates as substrates, but this may not be physiologically important. Probably plays a role in initiation of 16S rRNA degradation (leading to ribosome degradation) during starvation. This chain is Ribonuclease PH, found in Alteromonas mediterranea (strain DSM 17117 / CIP 110805 / LMG 28347 / Deep ecotype).